A 212-amino-acid chain; its full sequence is Thymidine kinase (212 aa).

Residues 11-18 (SPMNAGKT), 43-45 (DTR), and 86-89 (DEAQ) each bind ATP. E87 functions as the Proton acceptor in the catalytic mechanism. F119 contacts substrate. 4 residues coordinate Zn(2+): C144, C147, C183, and C186.

The protein belongs to the thymidine kinase family.

It carries out the reaction thymidine + ATP = dTMP + ADP + H(+). The polypeptide is Thymidine kinase (TK) (Encephalitozoon cuniculi (strain GB-M1) (Microsporidian parasite)).